We begin with the raw amino-acid sequence, 941 residues long: MPDASLFNGTSFITLFAPNISLLQASIDFYTNFLGFAIRKNSNQKLFWLQLEEDQNNVSIQLILDPEHAASVSQIDQNIRNLTRSLYRKDWRSIQSNIAFKSSSLSKLVKLLKDGGHPVQQSPNEISPFEVYTVDPLGSLIGFSGFKNPFAVNERSLLPKVSEEKAYRAEDDSEKLLNPVRKTIGVMTSGGDSPGMNPFVRAVVRAGIYKGCKVFCIHEGYEGLVRGGEKYIKETQWHDVRGWLVEGGTNIGTARCKEFRERSGRLKACKNMIDMGIDALIVCGGDGSLTGADRFRSEWPSLIEELLQTEQISQQQFNTHQNLNICGAVGSIDNDMSSTDATIGAFSSLDRICRAIDYIDATANSHSRAFIVEVMGRHCGWLGLLAGLATSADYILIPEKPASSREWQDQMCDIVGKHRARGKRKTIVIVAEGAISNDLSPISCDQVKDVLVNRLGLDTRVTTLGHVQRGGTAVAFDRIYATLQGVEAVNAVLECDADTPSPMIAIKEDQITRVPLVDAVELTQQVAKSIESRNFKKAISLRDSEFVEHMKNFISTNSADHVPPSLPLEKRKKIAIINVGAPAGGMNSAVYSMATYCMSRGHVPYAIHNGFSGLARHESVRSINWLDIEGWGSLGGSEIGTNRTLPNDADIGMIAYFFEKYGFDGLILVGGFEAFISLHQLERARINYPSLRIPLVLIPATISNNVPGTEYSLGSDTCLNSFMEYCDVIKQSAAATRNRVFVVEVQGGNSGYIATHAQLACGAQISYVPEEGISLAQLEMDINSLKESFANDQGKTKSGRLILKSENASKVLTTEVISTIIDDEASGRFDSKTAIPGHVQQGGIPSPMDRVRASRFAIRAVSFIERHSDRCQTFKNSISFRQTDEITSTAVVLGIHKSQLRFTPIRQLYDFESDVPRRMRKNIFWSNVREISDMLSGRTSL.

The tract at residues 2 to 558 (PDASLFNGTS…HMKNFISTNS (557 aa)) is N-terminal catalytic PFK domain 1. Residues glycine 191, 255 to 256 (RC), and 285 to 288 (GDGS) each bind ATP. Aspartate 286 contributes to the Mg(2+) binding site. Beta-D-fructose 6-phosphate-binding positions include 331 to 333 (SID), arginine 368, and 375 to 377 (MGR). Catalysis depends on aspartate 333, which acts as the Proton acceptor. ATP-binding positions include isoleucine 395, 400–405 (KPASSR), and glutamine 410. Residues glutamate 432, arginine 460, and 466 to 469 (HVQR) contribute to the beta-D-fructose 6-phosphate site. An ATP-binding site is contributed by 557 to 558 (NS). An interdomain linker region spans residues 559–572 (ADHVPPSLPLEKRK). The C-terminal regulatory PFK domain 2 stretch occupies residues 573-941 (KIAIINVGAP…SDMLSGRTSL (369 aa)). Beta-D-fructose 2,6-bisphosphate is bound by residues arginine 643, 701–705 (TISNN), arginine 739, 746–748 (QGG), glutamate 806, lysine 832, 838–841 (HVQQ), and arginine 918.

It belongs to the phosphofructokinase type A (PFKA) family. ATP-dependent PFK group I subfamily. Eukaryotic two domain clade 'E' sub-subfamily. In terms of assembly, heterododecamer of 4 alpha, 4 beta and 4 gamma chains. Requires Mg(2+) as cofactor.

Its subcellular location is the cytoplasm. It catalyses the reaction beta-D-fructose 6-phosphate + ATP = beta-D-fructose 1,6-bisphosphate + ADP + H(+). It participates in carbohydrate degradation; glycolysis; D-glyceraldehyde 3-phosphate and glycerone phosphate from D-glucose: step 3/4. With respect to regulation, allosterically activated by ADP, AMP, or fructose 2,6-bisphosphate, and allosterically inhibited by ATP or citrate. In terms of biological role, catalyzes the phosphorylation of D-fructose 6-phosphate to fructose 1,6-bisphosphate by ATP, the first committing step of glycolysis. The polypeptide is ATP-dependent 6-phosphofructokinase subunit beta (PFK2) (Komagataella pastoris (Yeast)).